The sequence spans 128 residues: Entry-fusion complex protein OPG094 (128 aa).

Residues 1 to 30 (MENVPNVYFNPVFIEPTFKHSLLSVYKHRL) lie on the Intravirion side of the membrane. A helical; Signal-anchor for type III membrane protein transmembrane segment spans residues 31–51 (IVLFEVFIVFILIYVFFRSEL). At 52 to 107 (NMFFMPKRKIPDPIDRLRRANLACEDDKLMIYGLPWMTTQTSALSINSKPIVYKDC) the chain is on the virion surface side. An intrachain disulfide couples Cys75 to Cys107.

It belongs to the orthopoxvirus OPG099 family. As to quaternary structure, interacts with OPG086. Component of the entry fusion complex (EFC) composed of OPG053, OPG076, OPG086, OPG094, OPG095, OPG099, OPG107, OPG143, OPG104J5, OPG147 and OPG155. Except for OPG095 and OPG053, each of the EFC proteins is required for assembly or stability of the complex. In terms of processing, most cysteines are linked by disulfide bonds. They are created by the viral disulfide bond formation pathway, a poxvirus-specific redox pathway that operates on the cytoplasmic side of the MV membranes. Post-translationally, unglycosylated because produced in viral factories instead of the classic ER -Golgi route.

It localises to the virion membrane. Its function is as follows. Component of the entry fusion complex (EFC), which consists of 11 proteins. During cell infection, this complex mediates entry of the virion core into the host cytoplasm by a two-step mechanism consisting of lipid mixing of the viral and cellular membranes and subsequent pore formation. The sequence is that of Entry-fusion complex protein OPG094 (OPG099) from Vaccinia virus (strain Ankara) (VACV).